A 152-amino-acid chain; its full sequence is Deoxyuridine 5'-triphosphate nucleotidohydrolase (152 aa).

Residues 71–73, asparagine 84, 88–90, and methionine 98 each bind substrate; these read RSG and LID.

The protein belongs to the dUTPase family. Requires Mg(2+) as cofactor.

The enzyme catalyses dUTP + H2O = dUMP + diphosphate + H(+). It participates in pyrimidine metabolism; dUMP biosynthesis; dUMP from dCTP (dUTP route): step 2/2. This enzyme is involved in nucleotide metabolism: it produces dUMP, the immediate precursor of thymidine nucleotides and it decreases the intracellular concentration of dUTP so that uracil cannot be incorporated into DNA. The polypeptide is Deoxyuridine 5'-triphosphate nucleotidohydrolase (Coxiella burnetii (strain Dugway 5J108-111)).